The following is a 618-amino-acid chain: MLWQALRRFGQKLVRRRVLELGMGETRLARCLSTLDLVALGVGSTLGAGVYVLAGEVAKDKAGPSIVICFLVAALSSVLAGLCYAEFGARVPGSGSAYLYSYVTVGELWAFTTGWNLILSYVIGTASVARAWSSAFDNLIGNHISRTLKGTILLKMPHVLAEYPDFFALALVLLLTGLLVLGASKSALVTKVFTGMNLLVLSFVIISGFIKGELRNWKLTKEDYCLTMSESNGTCSLDSMGSGGFMPFGLEGILRGAATCFYAFVGFDCIATTGEEAQNPQRSIPMGIVISMFICFLAYFGVSSALTLMMPYYKLHPESPLPEAFSYVGWEPARYLVAIGSLCALSTSLLGSMFPMPRVMYSMAEDGLLFRVLAKVHSVTHIPIVATLVSGVIAAFMAFLFELTDLVDLMSIGTLLAHSLVSICVLILRYQPDQEMKSVEEEMELQEETLEAEKLTVQALFCPVNSIPTLLSGRVVYVCSSLLAVLLTVLCLVLTWWTTPLRSGDPVWVTVVVLILGLILAISGVIWRQPQNRTPLHFKVPAVPLLPLVSIFVNVYLMMQMTAGTWARFGIWMLIGFAIYFGYGIQHSMKEVKNHQTLPKTRAQTIDLDLTTSCVHSI.

The Cytoplasmic segment spans residues 1-36 (MLWQALRRFGQKLVRRRVLELGMGETRLARCLSTLD). The chain crosses the membrane as a helical span at residues 37-57 (LVALGVGSTLGAGVYVLAGEV). The Extracellular segment spans residues 58 to 61 (AKDK). A helical membrane pass occupies residues 62–82 (AGPSIVICFLVAALSSVLAGL). Residues 83 to 107 (CYAEFGARVPGSGSAYLYSYVTVGE) lie on the Cytoplasmic side of the membrane. Residues 108–128 (LWAFTTGWNLILSYVIGTASV) traverse the membrane as a helical segment. The Extracellular portion of the chain corresponds to 129–162 (ARAWSSAFDNLIGNHISRTLKGTILLKMPHVLAE). Residues 163-183 (YPDFFALALVLLLTGLLVLGA) traverse the membrane as a helical segment. The Cytoplasmic segment spans residues 184-191 (SKSALVTK). Residues 192 to 212 (VFTGMNLLVLSFVIISGFIKG) form a helical membrane-spanning segment. Residues 213–244 (ELRNWKLTKEDYCLTMSESNGTCSLDSMGSGG) are Extracellular-facing. The N-linked (GlcNAc...) asparagine glycan is linked to asparagine 232. A helical transmembrane segment spans residues 245–265 (FMPFGLEGILRGAATCFYAFV). Residues 266–285 (GFDCIATTGEEAQNPQRSIP) lie on the Cytoplasmic side of the membrane. A helical membrane pass occupies residues 286–306 (MGIVISMFICFLAYFGVSSAL). At 307–335 (TLMMPYYKLHPESPLPEAFSYVGWEPARY) the chain is on the extracellular side. The helical transmembrane segment at 336-356 (LVAIGSLCALSTSLLGSMFPM) threads the bilayer. Residues 357-380 (PRVMYSMAEDGLLFRVLAKVHSVT) lie on the Cytoplasmic side of the membrane. A helical membrane pass occupies residues 381–401 (HIPIVATLVSGVIAAFMAFLF). Topologically, residues 402 to 406 (ELTDL) are extracellular. A helical transmembrane segment spans residues 407-427 (VDLMSIGTLLAHSLVSICVLI). Over 428–474 (LRYQPDQEMKSVEEEMELQEETLEAEKLTVQALFCPVNSIPTLLSGR) the chain is Cytoplasmic. Residues 475 to 495 (VVYVCSSLLAVLLTVLCLVLT) form a helical membrane-spanning segment. At 496–506 (WWTTPLRSGDP) the chain is on the extracellular side. The helical transmembrane segment at 507–527 (VWVTVVVLILGLILAISGVIW) threads the bilayer. Residues 528 to 539 (RQPQNRTPLHFK) lie on the Cytoplasmic side of the membrane. A helical transmembrane segment spans residues 540 to 560 (VPAVPLLPLVSIFVNVYLMMQ). The Extracellular portion of the chain corresponds to 561–568 (MTAGTWAR). A helical membrane pass occupies residues 569–589 (FGIWMLIGFAIYFGYGIQHSM). At 590 to 618 (KEVKNHQTLPKTRAQTIDLDLTTSCVHSI) the chain is on the cytoplasmic side. A Phosphothreonine modification is found at threonine 605. Serine 617 is subject to Phosphoserine.

The protein belongs to the amino acid-polyamine-organocation (APC) superfamily. Cationic amino acid transporter (CAT) (TC 2.A.3.3) family. Post-translationally, N-glycosylated. Expressed in adult brain and in a wide variety of embryonic tissues.

It localises to the cell membrane. It carries out the reaction L-arginine(in) = L-arginine(out). The catalysed reaction is L-lysine(in) = L-lysine(out). It catalyses the reaction L-ornithine(in) = L-ornithine(out). In terms of biological role, uniporter that mediates the uptake of cationic L-amino acids such as L-arginine, L-lysine and L-ornithine. The transport is sodium ions- and pH-independent, moderately trans-stimulated and is mediated by passive diffusion. In Mus musculus (Mouse), this protein is Cationic amino acid transporter 3.